The sequence spans 262 residues: Small ribosomal subunit protein uS3 (262 aa).

Residues 39 to 107 (VREFLKKKLK…PVHVNIEEIR (69 aa)) enclose the KH type-2 domain. Residues 211 to 262 (NDAPVVEEPQEERRKRPGRPEGRRREGEGRPAGQRRGAGAGARRGTDAKTGE) form a disordered region. The span at 221 to 239 (EERRKRPGRPEGRRREGEG) shows a compositional bias: basic and acidic residues.

Belongs to the universal ribosomal protein uS3 family. Part of the 30S ribosomal subunit. Forms a tight complex with proteins S10 and S14.

Binds the lower part of the 30S subunit head. Binds mRNA in the 70S ribosome, positioning it for translation. In Ralstonia pickettii (strain 12J), this protein is Small ribosomal subunit protein uS3.